A 604-amino-acid polypeptide reads, in one-letter code: Glutamine--fructose-6-phosphate aminotransferase [isomerizing] (604 aa).

Cys2 acts as the Nucleophile; for GATase activity in catalysis. The Glutamine amidotransferase type-2 domain maps to 2-218 (CGIVGVVGNR…DKELVILTKD (217 aa)). 2 SIS domains span residues 284–423 (IVKT…ANGK) and 456–594 (VEKL…VDKP). Lys599 (for Fru-6P isomerization activity) is an active-site residue.

Homodimer.

The protein localises to the cytoplasm. It catalyses the reaction D-fructose 6-phosphate + L-glutamine = D-glucosamine 6-phosphate + L-glutamate. Catalyzes the first step in hexosamine metabolism, converting fructose-6P into glucosamine-6P using glutamine as a nitrogen source. The chain is Glutamine--fructose-6-phosphate aminotransferase [isomerizing] from Streptococcus pyogenes serotype M6 (strain ATCC BAA-946 / MGAS10394).